We begin with the raw amino-acid sequence, 232 residues long: Small ribosomal subunit protein uS3 (232 aa).

A KH type-2 domain is found at 39–107 (IRAILHKELK…DVVINIVEIR (69 aa)).

The protein belongs to the universal ribosomal protein uS3 family. As to quaternary structure, part of the 30S ribosomal subunit. Forms a tight complex with proteins S10 and S14.

Its function is as follows. Binds the lower part of the 30S subunit head. Binds mRNA in the 70S ribosome, positioning it for translation. The sequence is that of Small ribosomal subunit protein uS3 from Rhodopseudomonas palustris (strain BisA53).